The primary structure comprises 470 residues: Ribulose bisphosphate carboxylase large chain (470 aa).

The substrate site is built by Asn115 and Thr165. Lys167 (proton acceptor) is an active-site residue. Position 169 (Lys169) interacts with substrate. Mg(2+) is bound by residues Lys193, Asp195, and Glu196. N6-carboxylysine is present on Lys193. His286 acts as the Proton acceptor in catalysis. Positions 287, 319, and 371 each coordinate substrate.

Belongs to the RuBisCO large chain family. Type I subfamily. Heterohexadecamer of 8 large chains and 8 small chains. Requires Mg(2+) as cofactor.

It localises to the carboxysome. It catalyses the reaction 2 (2R)-3-phosphoglycerate + 2 H(+) = D-ribulose 1,5-bisphosphate + CO2 + H2O. The enzyme catalyses D-ribulose 1,5-bisphosphate + O2 = 2-phosphoglycolate + (2R)-3-phosphoglycerate + 2 H(+). Functionally, ruBisCO catalyzes two reactions: the carboxylation of D-ribulose 1,5-bisphosphate, the primary event in carbon dioxide fixation, as well as the oxidative fragmentation of the pentose substrate in the photorespiration process. Both reactions occur simultaneously and in competition at the same active site. This Synechococcus sp. (strain CC9902) protein is Ribulose bisphosphate carboxylase large chain.